Reading from the N-terminus, the 188-residue chain is ADP-ribosylation factor J (188 aa).

GTP is bound by residues 34–40 (DGAGKST), 75–79 (DVGGQ), and 134–137 (NKQD).

The protein belongs to the small GTPase superfamily. Arf family.

Its subcellular location is the golgi apparatus. Its function is as follows. GTP-binding protein that may be involved in protein trafficking. May modulate vesicle budding and uncoating within the Golgi apparatus. The chain is ADP-ribosylation factor J (arrJ) from Dictyostelium discoideum (Social amoeba).